Consider the following 462-residue polypeptide: ATP synthase subunit beta (462 aa).

An ATP-binding site is contributed by 152–159; it reads GGAGVGKT.

Belongs to the ATPase alpha/beta chains family. As to quaternary structure, F-type ATPases have 2 components, CF(1) - the catalytic core - and CF(0) - the membrane proton channel. CF(1) has five subunits: alpha(3), beta(3), gamma(1), delta(1), epsilon(1). CF(0) has three main subunits: a(1), b(2) and c(9-12). The alpha and beta chains form an alternating ring which encloses part of the gamma chain. CF(1) is attached to CF(0) by a central stalk formed by the gamma and epsilon chains, while a peripheral stalk is formed by the delta and b chains.

The protein resides in the cell inner membrane. The catalysed reaction is ATP + H2O + 4 H(+)(in) = ADP + phosphate + 5 H(+)(out). Produces ATP from ADP in the presence of a proton gradient across the membrane. The catalytic sites are hosted primarily by the beta subunits. This chain is ATP synthase subunit beta, found in Shewanella amazonensis (strain ATCC BAA-1098 / SB2B).